Consider the following 423-residue polypeptide: Zinc transporter ZIP13 (423 aa).

Over 1–15 (MPGCPCPGIGMAGQR) the chain is Lumenal. The helical transmembrane segment at 16-36 (LLFLAALALELLGGAGGSQQA) threads the bilayer. The Cytoplasmic segment spans residues 37–68 (LRSRGVAAACRLDSKESESWGALLSGERLETW). Residues 69–89 (ICSLLGSLMVGLSGVFPLLVI) form a helical membrane-spanning segment. Residues 90–108 (PLEMGTTLRSEAGARRLKQ) lie on the Lumenal side of the membrane. The helical transmembrane segment at 109-129 (LLSFALGGLLGNVFLHLLPEA) threads the bilayer. Residues 130–149 (WAYTNSASSGGERQSLQQQQ) lie on the Cytoplasmic side of the membrane. A helical membrane pass occupies residues 150–170 (QLGLWVIAGFLTFLVLEKLFF). Over 171–235 (DSKGKEETSQ…TIDNFTHGLA (65 aa)) the chain is Lumenal. A helical transmembrane segment spans residues 236–256 (VAASFLVSKKIGLLTTMAILL). Positions 257–262 (HEIPHE) match the XEXPHE-motif motif. The Cytoplasmic segment spans residues 257-278 (HEIPHEVGDFAILLRAGFDRWS). Residues 279–299 (AAKLQLSTALGGLLGACFAIC) form a helical membrane-spanning segment. At 300–368 (AQSPKGVGTG…RAPPPATEET (69 aa)) the chain is on the lumenal side. Residues 369-389 (VAWILPFTSGGFLYIALVNVL) form a helical membrane-spanning segment. Residues 390 to 401 (PDLLEEDDPWRS) are Cytoplasmic-facing. Residues 402-422 (LQQVLLLCAGIVVMVLFSVFV) traverse the membrane as a helical segment. Glutamate 423 is a topological domain (lumenal).

It belongs to the ZIP transporter (TC 2.A.5) family. Homodimer.

Its subcellular location is the golgi apparatus membrane. The protein resides in the cytoplasmic vesicle membrane. It is found in the endoplasmic reticulum membrane. The catalysed reaction is Zn(2+)(in) = Zn(2+)(out). Functions as a zinc transporter transporting Zn(2+) from the Golgi apparatus to the cytosol and thus influences the zinc level at least in areas of the cytosol. May regulate beige adipocyte differentiation. The protein is Zinc transporter ZIP13 of Bos taurus (Bovine).